Consider the following 200-residue polypeptide: ATP synthase subunit s, mitochondrial (200 aa).

The transit peptide at 1 to 25 directs the protein to the mitochondrion; that stretch reads MMLFGKISQQLCGLKKLPWSRDSRY. Residues 1-61 are N-terminal domain; it reads MMLFGKISQQ…SEWLLRCGAM (61 aa). Gly-59 contacts Mg(2+). 4 LRR repeats span residues 62-87, 88-116, 117-141, and 142-173; these read VRYH…KYKI, QAID…KIRL, CKCH…KSML, and EMEI…LSDL. Thr-93 contributes to the Mg(2+) binding site.

The protein belongs to the ATP synthase subunit s family. As to quaternary structure, homotetramer. Associates with ATP synthase.

The protein resides in the mitochondrion. It is found in the mitochondrion inner membrane. Involved in regulation of mitochondrial membrane ATP synthase. Necessary for H(+) conduction of ATP synthase. Facilitates energy-driven catalysis of ATP synthesis by blocking a proton leak through an alternative proton exit pathway. This is ATP synthase subunit s, mitochondrial (DMAC2L) from Bos taurus (Bovine).